A 333-amino-acid chain; its full sequence is DNA-directed RNA polymerase subunit alpha (333 aa).

Residues 1–234 (MQISVNEFLT…QQLAAFVDLK (234 aa)) form an alpha N-terminal domain (alpha-NTD) region. The interval 248–333 (IDPILLRPVD…SLKKDDKATA (86 aa)) is alpha C-terminal domain (alpha-CTD).

Belongs to the RNA polymerase alpha chain family. Homodimer. The RNAP catalytic core consists of 2 alpha, 1 beta, 1 beta' and 1 omega subunit. When a sigma factor is associated with the core the holoenzyme is formed, which can initiate transcription.

The enzyme catalyses RNA(n) + a ribonucleoside 5'-triphosphate = RNA(n+1) + diphosphate. In terms of biological role, DNA-dependent RNA polymerase catalyzes the transcription of DNA into RNA using the four ribonucleoside triphosphates as substrates. The chain is DNA-directed RNA polymerase subunit alpha from Pseudomonas syringae pv. tomato (strain ATCC BAA-871 / DC3000).